A 449-amino-acid polypeptide reads, in one-letter code: Maltose-6'-phosphate glucosidase (449 aa).

6-72 (FSIVIAGGGS…PDIEFAATTD (67 aa)) serves as a coordination point for NAD(+). Residues R95 and N149 each contribute to the substrate site. Mn(2+) is bound at residue C171. The Proton donor role is filled by D172. Position 202 (H202) interacts with Mn(2+). Y265 serves as the catalytic Proton acceptor. R285 contributes to the substrate binding site.

It belongs to the glycosyl hydrolase 4 family. As to quaternary structure, homotetramer. The cofactor is Mn(2+). Fe(2+) serves as cofactor. Requires Co(2+) as cofactor. Ni(2+) is required as a cofactor. It depends on NAD(+) as a cofactor.

It carries out the reaction alpha-maltose 6'-phosphate + H2O = D-glucose 6-phosphate + D-glucose. Cellobiose-6'-phosphate and 6-phospho-beta-D-glucopyranoside are not substrates but competitive inhibitors of GlvA. Hydrolyzes maltose-6'-phosphate and trehalose-6'-phosphate. Is involved in the catabolism of alpha-glycosides accumulated via a phosphoenolpyruvate-dependent maltose phosphotransferase system (PEP-PTS). Is also able to significantly catalyze the hydrolysis of both 6-phospho-alpha- and 6-phospho-beta-glucosides containing activated leaving groups such as p-nitrophenol and does so with retention and inversion, respectively, of the substrate anomeric configuration. The protein is Maltose-6'-phosphate glucosidase (glvA) of Bacillus subtilis (strain 168).